The sequence spans 358 residues: Phospho-N-acetylmuramoyl-pentapeptide-transferase (358 aa).

10 helical membrane-spanning segments follow: residues 26–46 (TIYA…WIIR), 71–91 (TPTM…LLWA), 93–113 (LTNV…LIGF), 134–154 (MFWQ…TPGF), 170–190 (LGIF…NAVN), 197–217 (GLAI…AYVA), 234–254 (AGEL…FLWF), 261–281 (VFMG…IAVL), 286–306 (ILLV…IFQV), and 335–355 (KIIV…ISTL).

This sequence belongs to the glycosyltransferase 4 family. MraY subfamily. Mg(2+) serves as cofactor.

It localises to the cell inner membrane. The catalysed reaction is UDP-N-acetyl-alpha-D-muramoyl-L-alanyl-gamma-D-glutamyl-meso-2,6-diaminopimeloyl-D-alanyl-D-alanine + di-trans,octa-cis-undecaprenyl phosphate = di-trans,octa-cis-undecaprenyl diphospho-N-acetyl-alpha-D-muramoyl-L-alanyl-D-glutamyl-meso-2,6-diaminopimeloyl-D-alanyl-D-alanine + UMP. The protein operates within cell wall biogenesis; peptidoglycan biosynthesis. Functionally, catalyzes the initial step of the lipid cycle reactions in the biosynthesis of the cell wall peptidoglycan: transfers peptidoglycan precursor phospho-MurNAc-pentapeptide from UDP-MurNAc-pentapeptide onto the lipid carrier undecaprenyl phosphate, yielding undecaprenyl-pyrophosphoryl-MurNAc-pentapeptide, known as lipid I. This Trichlorobacter lovleyi (strain ATCC BAA-1151 / DSM 17278 / SZ) (Geobacter lovleyi) protein is Phospho-N-acetylmuramoyl-pentapeptide-transferase.